Here is a 276-residue protein sequence, read N- to C-terminus: MSDHADTLLGKDTTYPEHYDPALLQPIPRERSRETMVRGDLPFTGVDIWTAYELSWLDSSGKPHVAVGEFWVPADSSAIIESKSLKYYLNSLNQHRFATREQARQAIAGDLSEAAGGEVQVTLFDIDDYSNVGTLPGTCVDTLDAPVYVYQPDASLLKFVDQPGEQQQLFSHLLKSNCPVTGQPDWATVWVQCSGLTLVPESFLAYVVSFRGHQDFHENCVERIFTDLMAGGKLQDLAVYARYTRRGGLDINPLRFSGAQDPEALEQLVSKRIARQ.

80–82 (IES) contacts substrate. Residue 82 to 83 (SK) coordinates NADPH. Residue Cys-178 is the Thioimide intermediate of the active site. Asp-185 serves as the catalytic Proton donor. Position 217-218 (217-218 (HE)) interacts with substrate. 246–247 (RG) provides a ligand contact to NADPH.

This sequence belongs to the GTP cyclohydrolase I family. QueF type 2 subfamily. Homodimer.

The protein resides in the cytoplasm. It catalyses the reaction 7-aminomethyl-7-carbaguanine + 2 NADP(+) = 7-cyano-7-deazaguanine + 2 NADPH + 3 H(+). It functions in the pathway tRNA modification; tRNA-queuosine biosynthesis. In terms of biological role, catalyzes the NADPH-dependent reduction of 7-cyano-7-deazaguanine (preQ0) to 7-aminomethyl-7-deazaguanine (preQ1). The sequence is that of NADPH-dependent 7-cyano-7-deazaguanine reductase from Teredinibacter turnerae (strain ATCC 39867 / T7901).